A 504-amino-acid polypeptide reads, in one-letter code: Maturase K (504 aa).

The protein belongs to the intron maturase 2 family. MatK subfamily.

The protein resides in the plastid. Its subcellular location is the chloroplast. Usually encoded in the trnK tRNA gene intron. Probably assists in splicing its own and other chloroplast group II introns. The protein is Maturase K of Nepenthes distillatoria (Pitcher plant).